Here is a 501-residue protein sequence, read N- to C-terminus: Vitamin D 25-hydroxylase (501 aa).

A substrate-binding site is contributed by Ala-250. Residue Cys-448 participates in heme binding.

The protein belongs to the cytochrome P450 family. As to quaternary structure, homodimer. The cofactor is heme. Highly expressed in the liver and testis.

The protein resides in the endoplasmic reticulum membrane. It localises to the microsome membrane. It catalyses the reaction calciol + reduced [NADPH--hemoprotein reductase] + O2 = calcidiol + oxidized [NADPH--hemoprotein reductase] + H2O + H(+). The catalysed reaction is vitamin D2 + reduced [NADPH--hemoprotein reductase] + O2 = 25-hydroxyvitamin D2 + oxidized [NADPH--hemoprotein reductase] + H2O + H(+). It carries out the reaction 1alpha-hydroxyvitamin D2 + reduced [NADPH--hemoprotein reductase] + O2 = 1alpha,25-dihydroxyvitamin D2 + oxidized [NADPH--hemoprotein reductase] + H2O + H(+). The enzyme catalyses alfacalcidol + reduced [NADPH--hemoprotein reductase] + O2 = calcitriol + oxidized [NADPH--hemoprotein reductase] + H2O + H(+). Its pathway is hormone biosynthesis; vitamin D biosynthesis. A cytochrome P450 monooxygenase involved in activation of vitamin D precursors. Catalyzes hydroxylation at C-25 of both forms of vitamin D, vitamin D(2) and D(3) (calciol). Can metabolize vitamin D analogs/prodrugs 1alpha-hydroxyvitamin D(2) (doxercalciferol) and 1alpha-hydroxyvitamin D(3) (alfacalcidol) forming 25-hydroxy derivatives. Mechanistically, uses molecular oxygen inserting one oxygen atom into a substrate, and reducing the second into a water molecule, with two electrons provided by NADPH via cytochrome P450 reductase (CPR; NADPH-ferrihemoprotein reductase). This Mus musculus (Mouse) protein is Vitamin D 25-hydroxylase (Cyp2r1).